A 977-amino-acid polypeptide reads, in one-letter code: Mineralocorticoid receptor (977 aa).

A compositionally biased stretch (basic and acidic residues) spans 1–19 (METKGYHSRPEGLDMERRW). 2 disordered regions span residues 1–37 (METKGYHSRPEGLDMERRWGQVSQPVDRPSLGPAERT) and 231–288 (QGTP…VSSP). Residues 1–601 (METKGYHSRP…STGSSRPSKI (601 aa)) form a modulating region. Residues 231 to 243 (QGTPLTCSPTVDN) show a composition bias toward polar residues. Phosphoserine occurs at positions 250, 259, 283, 287, and 299. The segment covering 259-288 (SPLSSPLSSMKSPISSPPSHCSVKSPVSSP) has biased composition (low complexity). 2 disordered regions span residues 305–327 (NSRCSVSSPSKANNRSTLSSPAA) and 344–368 (SGASVGSSATRDVIPSPDTHEKGAH). 8 residues coordinate Zn(2+): C602, C605, C619, C622, C638, C644, C654, and C657. 2 NR C4-type zinc fingers span residues 602–622 (CLVCGDGASGCHYGVVTCGSC) and 638–662 (CAGRNDCIIDKIRRKNCPACRLQKC). Residues 602–667 (CLVCGDGASG…RLQKCLQAGM (66 aa)) constitute a DNA-binding region (nuclear receptor). Residues 668–718 (NLGARKSKKLGKLKGLHEEQPQQPPPPQSPEEGTTYIAPAKEPSVNTALVP) form a hinge region. Positions 682 to 703 (GLHEEQPQQPPPPQSPEEGTTY) are disordered. The 239-residue stretch at 719–957 (QLSSISRALT…EFPAMLVEII (239 aa)) folds into the NR LBD domain. 21-hydroxyprogesterone is bound by residues N763 and Q769. Aldosterone-binding residues include N763 and Q769. N763 and Q769 together coordinate progesterone. The important for coactivator binding stretch occupies residues 775–778 (KWAK). Residues R810 and T938 each coordinate 21-hydroxyprogesterone. Aldosterone-binding residues include R810 and T938. Residues R810 and T938 each contribute to the progesterone site.

This sequence belongs to the nuclear hormone receptor family. NR3 subfamily.

The protein resides in the cytoplasm. The protein localises to the nucleus. Functionally, receptor for both mineralocorticoids (MC) such as aldosterone and glucocorticoids (GC) such as corticosterone or cortisol. Binds to mineralocorticoid response elements (MRE) and transactivates target genes. The effect of MC is to increase ion and water transport and thus raise extracellular fluid volume and blood pressure and lower potassium levels. This Tupaia belangeri (Common tree shrew) protein is Mineralocorticoid receptor (NR3C2).